A 120-amino-acid polypeptide reads, in one-letter code: Large ribosomal subunit protein uL18 (120 aa).

This sequence belongs to the universal ribosomal protein uL18 family. In terms of assembly, part of the 50S ribosomal subunit; part of the 5S rRNA/L5/L18/L25 subcomplex. Contacts the 5S and 23S rRNAs.

Functionally, this is one of the proteins that bind and probably mediate the attachment of the 5S RNA into the large ribosomal subunit, where it forms part of the central protuberance. This chain is Large ribosomal subunit protein uL18, found in Brevibacillus brevis (strain 47 / JCM 6285 / NBRC 100599).